Reading from the N-terminus, the 229-residue chain is UPF0173 metal-dependent hydrolase SAR1785 (229 aa).

It belongs to the UPF0173 family.

The chain is UPF0173 metal-dependent hydrolase SAR1785 from Staphylococcus aureus (strain MRSA252).